A 288-amino-acid chain; its full sequence is Undecaprenyl-diphosphatase (288 aa).

A run of 8 helical transmembrane segments spans residues 25-45 (GITE…NEFL), 53-73 (FIDM…MVIY), 93-113 (WKLW…GLLL), 121-141 (LSNF…FIWI), 171-191 (VLSI…GIIV), 196-216 (SVAA…YSGL), 231-251 (GQAA…LFVI), and 263-283 (FTVF…YGAV).

It belongs to the UppP family.

The protein resides in the cell membrane. It catalyses the reaction di-trans,octa-cis-undecaprenyl diphosphate + H2O = di-trans,octa-cis-undecaprenyl phosphate + phosphate + H(+). In terms of biological role, catalyzes the dephosphorylation of undecaprenyl diphosphate (UPP). Confers resistance to bacitracin. The chain is Undecaprenyl-diphosphatase from Streptococcus thermophilus (strain CNRZ 1066).